The chain runs to 451 residues: CBL-interacting protein kinase 10 (451 aa).

The Protein kinase domain occupies 13–267; sequence YEIGKLLGQG…VSEIMEDPWF (255 aa). ATP-binding positions include 19-27 and K42; that span reads LGQGSFAKV. D135 serves as the catalytic Proton acceptor. Residues 153–182 are activation loop; it reads DFGLSALAECKRQDGLLHTTCGTPAYVAPE. One can recognise an NAF domain in the interval 304–336; sequence INEGKQEAENLTSLNAFDIISLSSGFDLSAMFE. The interval 341 to 370 is PPI; the sequence is KEESKFTSTNTATTITKKLEDVAKNLRLKF.

It belongs to the protein kinase superfamily. CAMK Ser/Thr protein kinase family. SNF1 subfamily. Requires Mn(2+) as cofactor.

The enzyme catalyses L-seryl-[protein] + ATP = O-phospho-L-seryl-[protein] + ADP + H(+). The catalysed reaction is L-threonyl-[protein] + ATP = O-phospho-L-threonyl-[protein] + ADP + H(+). Its function is as follows. CIPK serine-threonine protein kinases interact with CBL proteins. Binding of a CBL protein to the regulatory NAF domain of CIPK protein lead to the activation of the kinase in a calcium-dependent manner. In Oryza sativa subsp. japonica (Rice), this protein is CBL-interacting protein kinase 10 (CIPK10).